Reading from the N-terminus, the 1342-residue chain is DNA-directed RNA polymerase subunit beta (1342 aa).

It belongs to the RNA polymerase beta chain family. As to quaternary structure, the RNAP catalytic core consists of 2 alpha, 1 beta, 1 beta' and 1 omega subunit. When a sigma factor is associated with the core the holoenzyme is formed, which can initiate transcription.

The enzyme catalyses RNA(n) + a ribonucleoside 5'-triphosphate = RNA(n+1) + diphosphate. Its function is as follows. DNA-dependent RNA polymerase catalyzes the transcription of DNA into RNA using the four ribonucleoside triphosphates as substrates. The protein is DNA-directed RNA polymerase subunit beta of Salmonella agona (strain SL483).